The chain runs to 541 residues: Membrane protein insertase YidC (541 aa).

Transmembrane regions (helical) follow at residues 7-27, 346-368, 416-436, 454-474, and 495-515; these read LLVI…QLDY, IVQN…LYPL, LGGC…YWTF, LSAQ…MFLL, and PLIF…YWLV.

Belongs to the OXA1/ALB3/YidC family. Type 1 subfamily. As to quaternary structure, interacts with the Sec translocase complex via SecD. Specifically interacts with transmembrane segments of nascent integral membrane proteins during membrane integration.

Its subcellular location is the cell inner membrane. Required for the insertion and/or proper folding and/or complex formation of integral membrane proteins into the membrane. Involved in integration of membrane proteins that insert both dependently and independently of the Sec translocase complex, as well as at least some lipoproteins. Aids folding of multispanning membrane proteins. In Pasteurella multocida (strain Pm70), this protein is Membrane protein insertase YidC.